The primary structure comprises 179 residues: MQCPYCQHTNSRVLESRSSEGGQSIRRRRECLCCKHRFTTYERIEFVPITVIKHDGKKESFDPSKLLRGMVRACEKTGISYQKLETIVDDIEAQLQQRTQREVTSQEIGQLVLKYLRQENEVAYIRFASVYGRFQGIKDFVDTLKQLQEEDLVPSETIWKPANDDFSEQETPSTVMMPS.

A zinc finger spans residues 3–34; the sequence is CPYCQHTNSRVLESRSSEGGQSIRRRRECLCC. The ATP-cone domain maps to 49-139; sequence ITVIKHDGKK…VYGRFQGIKD (91 aa). The disordered stretch occupies residues 160 to 179; sequence KPANDDFSEQETPSTVMMPS. Polar residues predominate over residues 169–179; sequence QETPSTVMMPS.

The protein belongs to the NrdR family. Requires Zn(2+) as cofactor.

In terms of biological role, negatively regulates transcription of bacterial ribonucleotide reductase nrd genes and operons by binding to NrdR-boxes. The polypeptide is Transcriptional repressor NrdR (Rippkaea orientalis (strain PCC 8801 / RF-1) (Cyanothece sp. (strain PCC 8801))).